Reading from the N-terminus, the 164-residue chain is Phosphopantetheine adenylyltransferase (164 aa).

Serine 9 is a binding site for substrate. ATP contacts are provided by residues 9–10 and histidine 17; that span reads SF. Residues lysine 41, leucine 74, and arginine 88 each contribute to the substrate site. Residues 89 to 91, glutamate 99, and 124 to 130 contribute to the ATP site; these read GIR and YAEVSST.

Belongs to the bacterial CoaD family. In terms of assembly, homohexamer. Mg(2+) is required as a cofactor.

It localises to the cytoplasm. The catalysed reaction is (R)-4'-phosphopantetheine + ATP + H(+) = 3'-dephospho-CoA + diphosphate. The protein operates within cofactor biosynthesis; coenzyme A biosynthesis; CoA from (R)-pantothenate: step 4/5. In terms of biological role, reversibly transfers an adenylyl group from ATP to 4'-phosphopantetheine, yielding dephospho-CoA (dPCoA) and pyrophosphate. The protein is Phosphopantetheine adenylyltransferase of Chromobacterium violaceum (strain ATCC 12472 / DSM 30191 / JCM 1249 / CCUG 213 / NBRC 12614 / NCIMB 9131 / NCTC 9757 / MK).